The primary structure comprises 416 residues: UBX domain-containing protein 4 (416 aa).

The 78-residue stretch at 273–350 (KAISECLLRV…EFGSKTMLLF (78 aa)) folds into the UBX domain. The disordered stretch occupies residues 376–402 (TRTTPSVNTINKSNPQGPSDNATSIKK). Positions 378–402 (TTPSVNTINKSNPQGPSDNATSIKK) are enriched in polar residues.

Its subcellular location is the nucleus. The protein localises to the cytoplasm. Involved in CDC48-dependent protein degradation through the ubiquitin/proteasome pathway. This Saccharomyces cerevisiae (strain ATCC 204508 / S288c) (Baker's yeast) protein is UBX domain-containing protein 4 (UBX4).